Consider the following 155-residue polypeptide: Cytochrome c-type biogenesis protein CcmE (155 aa).

Topologically, residues 1–8 (MHPKRKQR) are cytoplasmic. Residues 9 to 29 (LILVLFVVLVSSVGVSLTLYA) form a helical; Signal-anchor for type II membrane protein membrane-spanning segment. Residues 30 to 155 (LNENINLFYP…KTCKGISYDS (126 aa)) are Periplasmic-facing. The heme site is built by His-124 and Tyr-128.

The protein belongs to the CcmE/CycJ family.

Its subcellular location is the cell inner membrane. Its function is as follows. Heme chaperone required for the biogenesis of c-type cytochromes. Transiently binds heme delivered by CcmC and transfers the heme to apo-cytochromes in a process facilitated by CcmF and CcmH. The chain is Cytochrome c-type biogenesis protein CcmE from Teredinibacter turnerae (strain ATCC 39867 / T7901).